The following is a 213-amino-acid chain: Sclerostin (213 aa).

The first 23 residues, 1-23 (MQLPLALCLVCLLVHTAFRVVEG), serve as a signal peptide directing secretion. The disordered stretch occupies residues 41 to 71 (GEYPEPPPELENNKTMNRAENGGRPPHHPFE). An N-linked (GlcNAc...) asparagine glycan is attached at asparagine 53. 4 disulfide bridges follow: cysteine 80/cysteine 134, cysteine 94/cysteine 148, cysteine 105/cysteine 165, and cysteine 109/cysteine 167. The 91-residue stretch at 82–172 (ELHFTRYVTD…ASCKCKRLTR (91 aa)) folds into the CTCK domain. The N-linked (GlcNAc...) asparagine glycan is linked to asparagine 175. Positions 178–213 (ELKDFGTEAARPQKGRKPRPRARSAKANQAELENAY) are disordered. A compositionally biased stretch (basic residues) spans 190 to 201 (QKGRKPRPRARS).

It belongs to the sclerostin family. In terms of assembly, interacts with LRP4 (via the extracellular domain); the interaction facilitates the inhibition of Wnt signaling. Interacts with LRP5 (via the first two YWTD-EGF repeat domains); the interaction inhibits Wnt-mediated signaling. Interacts with LRP6. Widely expressed at low levels with highest levels in bone, cartilage, kidney, liver, bone marrow and primary osteoblasts differentiated for 21 days. Detected in the subendothelial layer of the aortic intima (at protein level).

The protein localises to the secreted. It is found in the extracellular space. Its subcellular location is the extracellular matrix. Functionally, negative regulator of bone growth that acts through inhibition of Wnt signaling and bone formation. The protein is Sclerostin of Homo sapiens (Human).